The sequence spans 439 residues: MENQKNFLTTAPYKGTRDFYPEEMRLRNWMFSIMRETVLSFGYEEYDGPILESFDLYKAKSGEEIVERQLYDFIDKGERRVAIRPEMTPTLARMVAGNLRNLPRPVRWFSIPNLWRYEQPGKGRLREHWQLNVDLFGVDTHRAELEILLMADSILKKFGAPTGSYQIKVSHRKLLDSFLKNSLKLSDHQVHGVSKLLDKKSKISPETFEAEIKPLLNNFNEQFSLIETYLASNLETVSTIPGIDPDSIHFIRNLFQELGELGIDKQLVFDPSIIRGFDYYTGCIFEVFDTNPENRRSLYGGGRYDNLIGLFSKEQLSGIGFGLGDVTLKSFLENHNLIPDLSREKTLFLPIMDESIFVDTFKLSKELRENGILTETMLDSAKIGKQIQVAEKKGYRYVLFLGESEIRTETVQIKDLVSGEQKSLPRKGLSDILKKDFRL.

The protein belongs to the class-II aminoacyl-tRNA synthetase family. As to quaternary structure, homodimer.

The protein localises to the cytoplasm. It catalyses the reaction tRNA(His) + L-histidine + ATP = L-histidyl-tRNA(His) + AMP + diphosphate + H(+). This Leptospira borgpetersenii serovar Hardjo-bovis (strain L550) protein is Histidine--tRNA ligase.